We begin with the raw amino-acid sequence, 228 residues long: MKKQGVLIAPSIMGADLACLGDAARNIEESGANLIHIDVMDGHFVPNITFGPGIIAAINRSTDLFLEVHAMIYTPFEFVEAFVKAGADRIIVHFEAAENLKEILDYIRKCGVQAGIAFSPETSIEFISAFIPLCDVILLMSVQPGFCGQKFIPDTIEKIRFVRQAIQTLGKEGSCLIEVDGGIDEESARACREAGADILVAASYFFKKDSINMKEKVLLLQGEEHGAK.

Residue S11 participates in substrate binding. H36, D38, and H69 together coordinate a divalent metal cation. D38 serves as the catalytic Proton acceptor. Substrate-binding positions include H69, 145-148, 180-182, and 202-203; these read GFCG, DGG, and AS. D180 contributes to the a divalent metal cation binding site. Catalysis depends on D180, which acts as the Proton donor.

The protein belongs to the ribulose-phosphate 3-epimerase family. It depends on a divalent metal cation as a cofactor.

The catalysed reaction is D-ribulose 5-phosphate = D-xylulose 5-phosphate. It functions in the pathway carbohydrate degradation. Its function is as follows. Catalyzes the reversible epimerization of D-ribulose 5-phosphate to D-xylulose 5-phosphate. This Chlamydia muridarum (strain MoPn / Nigg) protein is Ribulose-phosphate 3-epimerase.